Reading from the N-terminus, the 172-residue chain is Shikimate kinase (172 aa).

11-16 (GAGKST) provides a ligand contact to ATP. Serine 15 lines the Mg(2+) pocket. Substrate-binding residues include aspartate 33, arginine 57, and glycine 79. An ATP-binding site is contributed by arginine 117. Substrate is bound at residue arginine 136. Arginine 153 provides a ligand contact to ATP.

It belongs to the shikimate kinase family. As to quaternary structure, monomer. It depends on Mg(2+) as a cofactor.

It localises to the cytoplasm. It catalyses the reaction shikimate + ATP = 3-phosphoshikimate + ADP + H(+). It functions in the pathway metabolic intermediate biosynthesis; chorismate biosynthesis; chorismate from D-erythrose 4-phosphate and phosphoenolpyruvate: step 5/7. Catalyzes the specific phosphorylation of the 3-hydroxyl group of shikimic acid using ATP as a cosubstrate. This chain is Shikimate kinase, found in Pseudomonas putida (strain ATCC 700007 / DSM 6899 / JCM 31910 / BCRC 17059 / LMG 24140 / F1).